A 234-amino-acid polypeptide reads, in one-letter code: Nitroreductase NfnB (234 aa).

Residue 25-29 (RRAVR) coordinates FMN. NADP(+)-binding residues include Ser-55, Arg-105, Tyr-113, and Ile-118. FMN-binding positions include Tyr-137, 181-182 (AL), and Arg-223.

Belongs to the nitroreductase family. Homodimer. The cofactor is FMN.

Its function is as follows. Confers resistance to antitubercular drugs benzothiazinone (BTZ) and dinitrobenzamide (DNB). Inactivates BTZ and DNB by reducing an essential nitro group of these compounds to amino group or to hydroxyl amine, respectively, using NADH or NADPH as source of reducing equivalents; two electrons are transferred. Able to reduce the nitro group of bicyclic nitroimidazole PA-824, but not of quinone menadione, nitrofurazone, methyl-4-nitrobenzoate, 4-nitrobenzene methyl sulfonate or 4-nitroacetophenone. This Mycolicibacterium smegmatis (strain ATCC 700084 / mc(2)155) (Mycobacterium smegmatis) protein is Nitroreductase NfnB.